A 179-amino-acid polypeptide reads, in one-letter code: Transcription factor 21 (179 aa).

Positions 20 to 87 are disordered; sequence CDGLKMDSNK…QVQRNAANAR (68 aa). The segment covering 33-46 has biased composition (low complexity); the sequence is TSNESTEESSNCEN. Residues 70-80 are compositionally biased toward polar residues; the sequence is SGVSQEGKQVQ. One can recognise a bHLH domain in the interval 79–131; that stretch reads VQRNAANARERARMRVLSKAFSRLKTTLPWVPPDTKLSKLDTLRLASSYIAHL.

Efficient DNA binding requires dimerization with another bHLH protein. Forms a heterodimer with TCF3 and binds the E box (5'-CANNTG-3').

The protein resides in the nucleus. Its function is as follows. Involved in epithelial-mesenchymal interactions in kidney and lung morphogenesis that include epithelial differentiation and branching morphogenesis. May play a role in the specification or differentiation of one or more subsets of epicardial cell types. This is Transcription factor 21 (TCF21) from Homo sapiens (Human).